The sequence spans 1595 residues: DNA-directed RNA polymerase subunit beta'' (1595 aa).

Zn(2+) contacts are provided by Cys-216, Cys-286, Cys-294, and Cys-297.

The protein belongs to the RNA polymerase beta' chain family. RpoC2 subfamily. As to quaternary structure, in plastids the minimal PEP RNA polymerase catalytic core is composed of four subunits: alpha, beta, beta', and beta''. When a (nuclear-encoded) sigma factor is associated with the core the holoenzyme is formed, which can initiate transcription. It depends on Zn(2+) as a cofactor.

Its subcellular location is the plastid. The protein localises to the chloroplast. The enzyme catalyses RNA(n) + a ribonucleoside 5'-triphosphate = RNA(n+1) + diphosphate. DNA-dependent RNA polymerase catalyzes the transcription of DNA into RNA using the four ribonucleoside triphosphates as substrates. The protein is DNA-directed RNA polymerase subunit beta'' of Bigelowiella natans (Pedinomonas minutissima).